Consider the following 475-residue polypeptide: Ribulose bisphosphate carboxylase large chain (475 aa).

A propeptide spanning residues 1–2 (MS) is cleaved from the precursor. P3 carries the N-acetylproline modification. At K14 the chain carries N6,N6,N6-trimethyllysine. Substrate-binding residues include N123 and T173. K175 (proton acceptor) is an active-site residue. Residue K177 coordinates substrate. Residues K201, D203, and E204 each coordinate Mg(2+). K201 is subject to N6-carboxylysine. The active-site Proton acceptor is the H294. Substrate contacts are provided by R295, H327, and S379.

The protein belongs to the RuBisCO large chain family. Type I subfamily. In terms of assembly, heterohexadecamer of 8 large chains and 8 small chains; disulfide-linked. The disulfide link is formed within the large subunit homodimers. It depends on Mg(2+) as a cofactor. The disulfide bond which can form in the large chain dimeric partners within the hexadecamer appears to be associated with oxidative stress and protein turnover.

The protein resides in the plastid. Its subcellular location is the chloroplast. It catalyses the reaction 2 (2R)-3-phosphoglycerate + 2 H(+) = D-ribulose 1,5-bisphosphate + CO2 + H2O. It carries out the reaction D-ribulose 1,5-bisphosphate + O2 = 2-phosphoglycolate + (2R)-3-phosphoglycerate + 2 H(+). In terms of biological role, ruBisCO catalyzes two reactions: the carboxylation of D-ribulose 1,5-bisphosphate, the primary event in carbon dioxide fixation, as well as the oxidative fragmentation of the pentose substrate in the photorespiration process. Both reactions occur simultaneously and in competition at the same active site. This chain is Ribulose bisphosphate carboxylase large chain, found in Magnolia macrophylla (Bigleaf magnolia).